The sequence spans 237 residues: uncharacterized protein (237 aa).

A helical membrane pass occupies residues leucine 53–valine 70. Positions proline 85–alanine 155 are disordered. Residues lysine 98–lysine 157 are a coiled coil. Composition is skewed to basic and acidic residues over residues threonine 106–lysine 122 and glutamate 128–alanine 155. The 73-residue stretch at alanine 165–lysine 237 folds into the SPOR domain.

The protein localises to the membrane. This is an uncharacterized protein from Aquifex aeolicus (strain VF5).